A 291-amino-acid chain; its full sequence is Nucleotide-binding protein Athe_0320 (291 aa).

9–16 (GMSGAGKS) serves as a coordination point for ATP. 60–63 (DIRG) is a GTP binding site.

It belongs to the RapZ-like family.

Displays ATPase and GTPase activities. In Caldicellulosiruptor bescii (strain ATCC BAA-1888 / DSM 6725 / KCTC 15123 / Z-1320) (Anaerocellum thermophilum), this protein is Nucleotide-binding protein Athe_0320.